The following is a 573-amino-acid chain: SHC-transforming protein 2 (573 aa).

The PID domain maps to 125 to 309; it reads LGPGVSYIVR…LEELAWGDDD (185 aa). The tract at residues 310-477 is CH1; sequence AAADHNYYNS…PTEEQLRQEP (168 aa). Tyr-316, Tyr-317, and Tyr-395 each carry phosphotyrosine. An SH2 domain is found at 478–569; that stretch reads WYHGRMSRRA…ESELHLRGVV (92 aa).

Interacts with the Trk receptors in a phosphotyrosine-dependent manner and MEGF12. Once activated, binds to GRB2. In terms of processing, phosphorylated on tyrosine by the Trk receptors. In terms of tissue distribution, expressed in brain. Expressed at high level in the hypothalamus and at low level in the caudate nucleus.

Its function is as follows. Signaling adapter that couples activated growth factor receptors to signaling pathway in neurons. Involved in the signal transduction pathways of neurotrophin-activated Trk receptors in cortical neurons. The polypeptide is SHC-transforming protein 2 (Shc2) (Mus musculus (Mouse)).